The sequence spans 566 residues: Ubiquitin carboxyl-terminal hydrolase 21 (566 aa).

Basic and acidic residues-rich tracts occupy residues 1–14 and 58–70; these read MPQA…RTRE and PPDE…ELGR. Disordered regions lie at residues 1–103 and 146–169; these read MPQA…LPLP and PEPP…PPTL. Low complexity-rich tracts occupy residues 71 to 81 and 151 to 160; these read GRTSGSRPRGP and LRRSTSLRRL. A Nuclear export signal motif is present at residues 134 to 152; sequence ELGAALSRLALRPEPPTLR. The USP domain occupies 212–559; it reads VGLRNLGNTC…EGYVLFYQLM (348 aa). Catalysis depends on Cys-221, which acts as the Nucleophile. A disordered region spans residues 324 to 349; the sequence is APPILASGPVPSPPRRGGGALHEEPE. Residues Cys-385, Cys-388, Cys-438, and Cys-441 each contribute to the Zn(2+) site. His-519 acts as the Proton acceptor in catalysis.

Belongs to the peptidase C19 family. USP21 subfamily. As to quaternary structure, interacts with BEND3.

The protein localises to the cytoplasm. Its subcellular location is the nucleus. It carries out the reaction Thiol-dependent hydrolysis of ester, thioester, amide, peptide and isopeptide bonds formed by the C-terminal Gly of ubiquitin (a 76-residue protein attached to proteins as an intracellular targeting signal).. Its function is as follows. Deubiquitinates histone H2A, a specific tag for epigenetic transcriptional repression, thereby acting as a coactivator. Deubiquitination of histone H2A releaves the repression of di- and trimethylation of histone H3 at 'Lys-4', resulting in regulation of transcriptional initiation. Regulates gene expression via histone H2A deubiquitination. Deubiquitinates BAZ2A/TIP5 leading to its stabilization. Also capable of removing NEDD8 from NEDD8 conjugates but has no effect on Sentrin-1 conjugates. Also acts as a negative regulator of the ribosome quality control (RQC) by mediating deubiquitination of 40S ribosomal proteins RPS10/eS10 and RPS20/uS10, thereby antagonizing ZNF598-mediated 40S ubiquitination. The protein is Ubiquitin carboxyl-terminal hydrolase 21 of Mus musculus (Mouse).